Reading from the N-terminus, the 579-residue chain is Nuclear hormone receptor family member nhr-71 (579 aa).

A DNA-binding region (nuclear receptor) is located at residues 8–83 (SQECMVCSAP…AGMKIGAVQP (76 aa)). 2 consecutive NR C4-type zinc fingers follow at residues 11-31 (CMVCSAPADGLHYGAISCRSC) and 47-71 (CKHTNTCLIDPDGRCACRSCRFTKC). Disordered stretches follow at residues 82–124 (QPRR…SDGP) and 168–189 (EPIPSTSSAPEKQSCQSSPNDD). Polar residues-rich tracts occupy residues 106 to 124 (SMNNSPLERNGNSFSSDGP) and 171 to 186 (PSTSSAPEKQSCQSSP). The NR LBD domain maps to 189–452 (DEQQEFNHLV…KFWYETLCYA (264 aa)).

Belongs to the nuclear hormone receptor family.

The protein localises to the nucleus. In terms of biological role, orphan nuclear receptor. This is Nuclear hormone receptor family member nhr-71 (nhr-71) from Caenorhabditis elegans.